The primary structure comprises 727 residues: DNA replication licensing factor MCM5 (727 aa).

Residues 325 to 531 enclose the MCM domain; it reads VYKNICTKIA…SQDKEIASHI (207 aa). ATP is bound at residue 375–382; sequence GDPSTAKS. Positions 507 to 510 match the Arginine finger motif; that stretch reads SRFD.

This sequence belongs to the MCM family. As to quaternary structure, component of the minichromosome maintenance (MCM) complex, a heterotetramer composed of MCM2, MCM3, MCM4, MCM5, MCM6 and MCM7. Interacts with EGT1. As to expression, expressed in shoot apex and flower buds.

It localises to the nucleus. The protein resides in the cytoplasm. It catalyses the reaction ATP + H2O = ADP + phosphate + H(+). In terms of biological role, probable component of the MCM2-7 complex (MCM complex) that may function as a DNA helicase and which is essential to undergo a single round of replication initiation and elongation per cell cycle in eukaryotic cells. The polypeptide is DNA replication licensing factor MCM5 (MCM5) (Arabidopsis thaliana (Mouse-ear cress)).